A 65-amino-acid polypeptide reads, in one-letter code: Large ribosomal subunit protein uL29 (65 aa).

It belongs to the universal ribosomal protein uL29 family.

The sequence is that of Large ribosomal subunit protein uL29 from Coxiella burnetii (strain CbuK_Q154) (Coxiella burnetii (strain Q154)).